An 89-amino-acid polypeptide reads, in one-letter code: Small ribosomal subunit protein uS15 (89 aa).

This sequence belongs to the universal ribosomal protein uS15 family. Part of the 30S ribosomal subunit. Forms a bridge to the 50S subunit in the 70S ribosome, contacting the 23S rRNA.

Functionally, one of the primary rRNA binding proteins, it binds directly to 16S rRNA where it helps nucleate assembly of the platform of the 30S subunit by binding and bridging several RNA helices of the 16S rRNA. In terms of biological role, forms an intersubunit bridge (bridge B4) with the 23S rRNA of the 50S subunit in the ribosome. This chain is Small ribosomal subunit protein uS15, found in Shewanella sediminis (strain HAW-EB3).